The primary structure comprises 453 residues: F-box protein SKIP14 (453 aa).

One can recognise an F-box; degenerate domain in the interval 34-104 (RKNTGGDASS…NRQQLFAGLS (71 aa)).

In terms of assembly, part of a SCF (ASK-cullin-F-box) protein ligase complex. Interacts with CUL1, SKP1A/ASK1 and SPK1B/ASK2.

Its pathway is protein modification; protein ubiquitination. Its function is as follows. Component of SCF(ASK-cullin-F-box) E3 ubiquitin ligase complexes, which may mediate the ubiquitination and subsequent proteasomal degradation of target proteins. The chain is F-box protein SKIP14 (SKIP14) from Arabidopsis thaliana (Mouse-ear cress).